A 257-amino-acid chain; its full sequence is uncharacterized protein (257 aa).

Residues 74–83 (LKDDLTRDNS) are compositionally biased toward basic and acidic residues. Disordered regions lie at residues 74–115 (LKDD…TQKR) and 209–257 (PYLN…YDSF). Positions 100–113 (SFQNMNSSMPSSTQ) are enriched in polar residues. Residues 216–236 (SEDDTDSSIVEVETDYSEEEK) show a composition bias toward acidic residues.

The protein belongs to the asfivirus DP238L family.

This is an uncharacterized protein from Ornithodoros (relapsing fever ticks).